Reading from the N-terminus, the 247-residue chain is Carboxy-S-adenosyl-L-methionine synthase (247 aa).

Residues Tyr-39, 64 to 66, 117 to 118, Asn-132, and Arg-199 contribute to the S-adenosyl-L-methionine site; these read GCS and DI.

The protein belongs to the class I-like SAM-binding methyltransferase superfamily. Cx-SAM synthase family. In terms of assembly, homodimer.

The catalysed reaction is prephenate + S-adenosyl-L-methionine = carboxy-S-adenosyl-L-methionine + 3-phenylpyruvate + H2O. Functionally, catalyzes the conversion of S-adenosyl-L-methionine (SAM) to carboxy-S-adenosyl-L-methionine (Cx-SAM). This is Carboxy-S-adenosyl-L-methionine synthase from Aeromonas salmonicida (strain A449).